A 53-amino-acid polypeptide reads, in one-letter code: UPF0391 membrane protein YtjA (53 aa).

The next 2 membrane-spanning stretches (helical) occupy residues 4–24 (WGII…GGLA) and 30–48 (AAKI…SLFM).

It belongs to the UPF0391 family.

It localises to the cell membrane. The protein is UPF0391 membrane protein YtjA of Salmonella agona (strain SL483).